A 530-amino-acid polypeptide reads, in one-letter code: Ubiquitin carboxyl-terminal hydrolase 17-like protein 18 (530 aa).

Residues 80–375 form the USP domain; the sequence is AGLQNMGNTC…QAYVLFYIQK (296 aa). The Nucleophile role is filled by cysteine 89. The Proton acceptor role is filled by histidine 334. 2 stretches are compositionally biased toward basic and acidic residues: residues 382–392 and 398–413; these read SESVSRGREPR and DTDR…RDHP. Disordered stretches follow at residues 382–414 and 509–530; these read SESV…DHPC and RGRA…LVCQ. Residues 510-524 are compositionally biased toward basic residues; the sequence is GRARRSKGKNKHSKR.

This sequence belongs to the peptidase C19 family. USP17 subfamily.

Its subcellular location is the nucleus. It is found in the endoplasmic reticulum. It catalyses the reaction Thiol-dependent hydrolysis of ester, thioester, amide, peptide and isopeptide bonds formed by the C-terminal Gly of ubiquitin (a 76-residue protein attached to proteins as an intracellular targeting signal).. Functionally, deubiquitinating enzyme that removes conjugated ubiquitin from specific proteins to regulate different cellular processes that may include cell proliferation, progression through the cell cycle, apoptosis, cell migration, and the cellular response to viral infection. In Homo sapiens (Human), this protein is Ubiquitin carboxyl-terminal hydrolase 17-like protein 18 (USP17L18).